We begin with the raw amino-acid sequence, 558 residues long: Deleted in azoospermia protein 2 (558 aa).

Positions 1–10 (MSAANPETPN) are enriched in polar residues. Positions 1–27 (MSAANPETPNSTISREASTQSSSAAAS) are disordered. The segment covering 11–27 (STISREASTQSSSAAAS) has biased composition (low complexity). An RRM domain is found at 40–115 (NTVFVGGIDA…KKLKLGPAIR (76 aa)). DAZ domains follow at residues 167–190 (AYSA…YNYQ), 191–214 (EYPT…YNYQ), 215–238 (PFPA…YNYQ), 239–262 (AFPA…YNYQ), 263–286 (PFPA…YNYQ), 287–310 (AFPA…YNYQ), 311–334 (AFPA…YNYQ), 335–358 (AFPA…YNYQ), 359–382 (AFPA…YNYQ), 383–406 (AFPA…YNYQ), 407–430 (AFPA…YNYQ), 431–454 (AFPA…YNYQ), 455–478 (AFPA…YNYQ), 479–502 (AFPA…YNYQ), and 503–526 (AFPA…YNYQ).

It belongs to the RRM DAZ family. In terms of assembly, forms a heterodimer with BOLL and DAZL. Interacts with PUM2, DAZAP1, DAZAP2, DZIP1 and DZIP3. In terms of tissue distribution, testis specific.

Its subcellular location is the cytoplasm. The protein localises to the nucleus. In terms of biological role, RNA-binding protein that plays an essential role in spermatogenesis. May act by binding to the 3'-UTR of mRNAs and regulating their translation. This Homo sapiens (Human) protein is Deleted in azoospermia protein 2 (DAZ2).